A 360-amino-acid polypeptide reads, in one-letter code: D-xylose 1-dehydrogenase [NADP(+)] (360 aa).

It belongs to the Gfo/Idh/MocA family. In terms of assembly, homotretramer.

The catalysed reaction is D-xylofuranose + NADP(+) = D-xylono-1,4-lactone + NADPH + H(+). In terms of biological role, NADP-dependent D-xylose dehydrogenase involved in the degradation of D-xylose, a major component of hemicelluloses such as xylan. In addition to D-xylose, oxidizes D-ribose at similar kinetic constants, whereas D-glucose is oxidized with about 70-fold lower catalytic efficiency. The polypeptide is D-xylose 1-dehydrogenase [NADP(+)] (gfo6) (Haloarcula marismortui (strain ATCC 43049 / DSM 3752 / JCM 8966 / VKM B-1809) (Halobacterium marismortui)).